We begin with the raw amino-acid sequence, 281 residues long: Protein NipSnap homolog 2 (281 aa).

Residues 1 to 27 (MAARVLLARGGLLRPAAQSAFLPGLRT) constitute a mitochondrion transit peptide.

The protein belongs to the NipSnap family. Interacts with CALCOCO2/NDP52, NBR1, SQSTM1/p62, TAX1BP1 and WDFY3/ALFY. Interacts with ATG8 family proteins (MAP1LC3A, MAP1LC3B, MAP1LC3C, GABARAP, GABARAPL1 and GABARAPL2). Interacts with VDAC1.

It localises to the mitochondrion matrix. The protein resides in the cytoplasm. Functionally, protein involved in mitophagy by facilitating recruitment of the autophagy machinery required for clearance of damaged mitochondria. Accumulates on the mitochondria surface in response to mitochondrial depolarization and acts as a 'eat me' signal by recruiting proteins involved in selective autophagy, such as autophagy receptors (CALCOCO2/NDP52, NBR1, SQSTM1/p62, TAX1BP1 and WDFY3/ALFY) and ATG8 family proteins (MAP1LC3A, MAP1LC3B, MAP1LC3C, GABARAP, GABARAPL1 and GABARAPL2). May act as a positive regulator of L-type calcium channels. The chain is Protein NipSnap homolog 2 from Mus musculus (Mouse).